The sequence spans 286 residues: Plasma membrane ascorbate-dependent reductase CYBRD1 (286 aa).

Over Met1 to Trp7 the chain is Cytoplasmic. Residues Arg8–Leu32 form a helical membrane-spanning segment. Residues Ser15–Thr220 enclose the Cytochrome b561 domain. Residues His33 to Phe47 are Extracellular-facing. The chain crosses the membrane as a helical span at residues Asn48–Tyr69. Heme b is bound by residues His50, Arg70, and Lys79. Residues Arg70–Ser78 lie on the Cytoplasmic side of the membrane. 2 residues coordinate L-ascorbate: Lys79 and Lys83. A helical membrane pass occupies residues Lys79–Phe105. His86 provides a ligand contact to heme b. The Extracellular segment spans residues Glu106–Ser118. Residue His108 coordinates Fe(3+). Residues Asn115–Ser118 and His120 contribute to the heme b site. Residues Leu119 to Leu144 form a helical membrane-spanning segment. The Cytoplasmic portion of the chain corresponds to Pro145–Leu151. Arg152 provides a ligand contact to L-ascorbate. A helical transmembrane segment spans residues Arg152 to Thr179. 2 residues coordinate heme b: His159 and Glu180. Topologically, residues Glu180–Glu197 are extracellular. The helical transmembrane segment at Gly198 to Pro222 threads the bilayer. The Cytoplasmic segment spans residues Gln223–Met286. Lys225 contacts heme b. Residues Glu229–Val268 form a disordered region. Ser232 is modified (phosphoserine). Residue Thr285 is modified to Phosphothreonine.

In terms of assembly, homodimer. The cofactor is heme b. As to expression, present in erythrocyte membranes (at protein level). Also expressed in respiratory epithelium.

The protein localises to the cell membrane. It is found in the apical cell membrane. The enzyme catalyses Fe(3+)(out) + L-ascorbate(in) = monodehydro-L-ascorbate radical(in) + Fe(2+)(out) + H(+). It carries out the reaction Cu(2+)(out) + L-ascorbate(in) = Cu(+)(out) + monodehydro-L-ascorbate radical(in) + H(+). It catalyses the reaction monodehydro-L-ascorbate radical(out) + L-ascorbate(in) = monodehydro-L-ascorbate radical(in) + L-ascorbate(out). Its activity is regulated as follows. Activated by chelators like citrate, malate, and oxalate specially at alkaline pH. Its function is as follows. Plasma membrane reductase that uses cytoplasmic ascorbate as an electron donor to reduce extracellular Fe(3+) into Fe(2+). Probably functions in dietary iron absorption at the brush border of duodenal enterocytes by producing Fe(2+), the divalent form of iron that can be transported into enterocytes. It is also able to reduce extracellular monodehydro-L-ascorbate and may be involved in extracellular ascorbate regeneration by erythrocytes in blood. May also act as a ferrireductase in airway epithelial cells. May also function as a cupric transmembrane reductase. The polypeptide is Plasma membrane ascorbate-dependent reductase CYBRD1 (Homo sapiens (Human)).